The chain runs to 966 residues: General transcriptional corepressor CYC8 (966 aa).

Positions 1–37 are disordered; it reads MNPGGEQTIMEQPAQQQQQQQQQQQQQQQQAAVPQQP. A compositionally biased stretch (low complexity) spans 12–36; that stretch reads QPAQQQQQQQQQQQQQQQQAAVPQQ. TPR repeat units follow at residues 46-79, 80-113, 114-147, 150-183, 187-220, 224-257, 262-295, 296-329, 330-363, and 364-398; these read AETWLSIASLAETLGDGDRAAMAYDATLQFNPSS, AKALTSLAHLYRSRDMFQRAAELYERALLVNPEL, SDVWATLGHCYLMLDDLQRAYNAYQQALYHLSNP, PKLWHGIGILYDRYGSLDYAEEAFAKVLELDPHF, NEIYFRLGIIYKHQGKWSQALECFRYILPQPPAP, WDIWFQLGSVLESMGEWQGAKEAYEHVLAQNQHH, QQLGCLYGMSNVQFYDPQKALDYLLKSLEADPSD, ATTWYHLGRVHMIRTDYTAAYDAFQQAVNRDSRN, PIFWCSIGVLYYQISQYRDALDAYTRAIRLNPYI, and SEVWYDLGTLYETCNNQLSDALDAYKQAARLDVNN. Polar residues-rich tracts occupy residues 412 to 429 and 439 to 489; these read LENPGNINKSNGAPTNAS and PTLQ…NGAS. 3 disordered regions span residues 412-489, 631-666, and 699-723; these read LENP…NGAS, TQAMEHPQSSQLPPQQQQLQSVQHPQQLQGQPQAQA, and SSSTHTENNTKSPRQPTHAIPTQAP. A Phosphoserine modification is found at Ser429. The prion domain (PrD) stretch occupies residues 467-682; it reads QQQHPAQQTP…HNVEQNVLPQ (216 aa). Thr475 bears the Phosphothreonine mark. The segment covering 637 to 666 has biased composition (low complexity); the sequence is PQSSQLPPQQQQLQSVQHPQQLQGQPQAQA. The span at 699–713 shows a compositional bias: polar residues; that stretch reads SSSTHTENNTKSPRQ. A phosphoserine mark is found at Ser710, Ser741, and Ser768. Polar residues predominate over residues 759 to 780; sequence NAKSEVSNQSPAVVESNTNNTS. Residues 759–966 form a disordered region; the sequence is NAKSEVSNQS…QVEEDENYDD (208 aa). Positions 797 to 808 are enriched in low complexity; the sequence is AQEPPQEASPAE. Residues 814–823 are compositionally biased toward polar residues; that stretch reads ASVSPSTKPL. A phosphoserine mark is found at Ser815 and Ser817. Residues 826–843 are compositionally biased toward low complexity; it reads EPESSSVQPTVSSESSTT. Positions 844–860 are enriched in polar residues; the sequence is KANDQSTAETIELSTAT. Ser866 bears the Phosphoserine mark. Residues 870-880 are compositionally biased toward basic and acidic residues; that stretch reads DEVRQHSKEEN. Positions 882 to 896 are enriched in low complexity; the sequence is TTEASAPSTEEAEPA. Basic and acidic residues-rich tracts occupy residues 897 to 906 and 924 to 936; these read ASRDAEKQQD and ETVKEEAKMREEE. Positions 940-950 are enriched in polar residues; sequence QEKSPQENTLP. Phosphoserine is present on Ser943.

The protein belongs to the CYC8/SSN6 family. In terms of assembly, associates with TUP1 to form the CYC8-TUP1 (or TUP1-SSN6) corepressor complex that is composed of 4 copies of TUP1 and one copy of CYC8. Interacts with MATALPHA2, CTI6, MIG1, TUP1, SUT1, RFX1, PGD1, HOS1, HOS2 and RPD3.

Its subcellular location is the nucleus. In terms of biological role, acts as a component of the CYC8-TUP1 corepressor complex which is involved in the repression of many genes in a wide variety of physiological processes including heme-regulated and catabolite repressed genes. May also be involved in the derepression of at least some target genes. The complex is recruited to target genes by interaction with DNA-bound transcriptional repressors, like MATALPHA2, MIG1, RFX1 and SKO1. The complex recruits histone deacetylases to produce a repressive chromatin structure, interacts with hypoacetylated N-terminal tails of histones H3 and H4 that have been programmed for repression by the action of histone deacetylases and interferes directly with the transcriptional machinery by associating with the RNA polymerase II mediator complex. The protein is General transcriptional corepressor CYC8 (CYC8) of Saccharomyces cerevisiae (strain ATCC 204508 / S288c) (Baker's yeast).